The sequence spans 1404 residues: DNA-directed RNA polymerase subunit beta' (1404 aa).

Positions 72, 74, 87, and 90 each coordinate Zn(2+). Positions 462, 464, and 466 each coordinate Mg(2+). Zn(2+) contacts are provided by C816, C890, C897, and C900.

Belongs to the RNA polymerase beta' chain family. In terms of assembly, the RNAP catalytic core consists of 2 alpha, 1 beta, 1 beta' and 1 omega subunit. When a sigma factor is associated with the core the holoenzyme is formed, which can initiate transcription. It depends on Mg(2+) as a cofactor. The cofactor is Zn(2+).

The enzyme catalyses RNA(n) + a ribonucleoside 5'-triphosphate = RNA(n+1) + diphosphate. DNA-dependent RNA polymerase catalyzes the transcription of DNA into RNA using the four ribonucleoside triphosphates as substrates. The protein is DNA-directed RNA polymerase subunit beta' of Azoarcus sp. (strain BH72).